The chain runs to 241 residues: Ribonuclease PH (241 aa).

Phosphate contacts are provided by residues arginine 87 and 125–127; that span reads GTR.

Belongs to the RNase PH family. Homohexameric ring arranged as a trimer of dimers.

It carries out the reaction tRNA(n+1) + phosphate = tRNA(n) + a ribonucleoside 5'-diphosphate. Phosphorolytic 3'-5' exoribonuclease that plays an important role in tRNA 3'-end maturation. Removes nucleotide residues following the 3'-CCA terminus of tRNAs; can also add nucleotides to the ends of RNA molecules by using nucleoside diphosphates as substrates, but this may not be physiologically important. Probably plays a role in initiation of 16S rRNA degradation (leading to ribosome degradation) during starvation. In Dehalococcoides mccartyi (strain ATCC BAA-2100 / JCM 16839 / KCTC 5957 / BAV1), this protein is Ribonuclease PH.